We begin with the raw amino-acid sequence, 635 residues long: Threonine--tRNA ligase (635 aa).

A TGS domain is found at 1–61 (MINISFPDGS…DNDCKFRILT (61 aa)). A catalytic region spans residues 242 to 533 (DHRKLGRELD…LIEEYAGRFP (292 aa)). Residues cysteine 333, histidine 384, and histidine 510 each contribute to the Zn(2+) site.

Belongs to the class-II aminoacyl-tRNA synthetase family. In terms of assembly, homodimer. Requires Zn(2+) as cofactor.

It localises to the cytoplasm. It carries out the reaction tRNA(Thr) + L-threonine + ATP = L-threonyl-tRNA(Thr) + AMP + diphosphate + H(+). Its function is as follows. Catalyzes the attachment of threonine to tRNA(Thr) in a two-step reaction: L-threonine is first activated by ATP to form Thr-AMP and then transferred to the acceptor end of tRNA(Thr). Also edits incorrectly charged L-seryl-tRNA(Thr). In Rickettsia rickettsii (strain Sheila Smith), this protein is Threonine--tRNA ligase.